A 427-amino-acid chain; its full sequence is Phosphatidylinositol 4-phosphate 5-kinase 10 (427 aa).

A PIPK domain is found at 1-419 (MFTREITAKD…RFQDFVSQIF (419 aa)). 2 disordered regions span residues 247–287 (SRGS…DSEN) and 334–355 (MKIP…VGKQ). The activation loop stretch occupies residues 379-400 (YGVRKRLEHCYKSIQHSSKTIS).

The catalysed reaction is a 1,2-diacyl-sn-glycero-3-phospho-(1D-myo-inositol 4-phosphate) + ATP = a 1,2-diacyl-sn-glycero-3-phospho-(1D-myo-inositol-4,5-bisphosphate) + ADP + H(+). This is Phosphatidylinositol 4-phosphate 5-kinase 10 (PIP5K10) from Arabidopsis thaliana (Mouse-ear cress).